A 127-amino-acid chain; its full sequence is Holo-[acyl-carrier-protein] synthase (127 aa).

Residues aspartate 7 and glutamate 53 each coordinate Mg(2+).

It belongs to the P-Pant transferase superfamily. AcpS family. Mg(2+) serves as cofactor.

It is found in the cytoplasm. It catalyses the reaction apo-[ACP] + CoA = holo-[ACP] + adenosine 3',5'-bisphosphate + H(+). In terms of biological role, transfers the 4'-phosphopantetheine moiety from coenzyme A to a Ser of acyl-carrier-protein. The sequence is that of Holo-[acyl-carrier-protein] synthase from Herpetosiphon aurantiacus (strain ATCC 23779 / DSM 785 / 114-95).